We begin with the raw amino-acid sequence, 287 residues long: N-methyltransferase verN (287 aa).

The protein belongs to the methyltransferase superfamily. LaeA methyltransferase family.

It functions in the pathway mycotoxin biosynthesis. Its function is as follows. N-methyltransferase; part of the gene cluster that mediates the biosynthesis of 11'-deoxyverticillin A, one of the dimeric epipolythiodioxopiperazines (ETPs) from the verticillin family that act as mycotoxins. 11'-deoxyverticillin A is required for normal conidiation. The nonribosomal peptide synthetase verP is speculated to be responsible for condensation of amino acids to form the carbon skeleton of verticillin, whereas the cluster-specific tailoring enzymes are involved in further modifications leading to the production of 11'-deoxyverticillin A. The polypeptide is N-methyltransferase verN (Clonostachys rogersoniana).